Reading from the N-terminus, the 585-residue chain is Protein FAM151A (585 aa).

The helical transmembrane segment at 14–34 (WVFASITCVSAVAIAAIVLAI) threads the bilayer.

Belongs to the menorin family.

The protein localises to the membrane. This Pongo abelii (Sumatran orangutan) protein is Protein FAM151A (FAM151A).